The primary structure comprises 315 residues: tRNA-cytidine(32) 2-sulfurtransferase (315 aa).

Positions 54–59 (SGGKDS) match the PP-loop motif motif. Cysteine 129, cysteine 132, and cysteine 220 together coordinate [4Fe-4S] cluster.

Belongs to the TtcA family. As to quaternary structure, homodimer. It depends on Mg(2+) as a cofactor. Requires [4Fe-4S] cluster as cofactor.

It is found in the cytoplasm. It catalyses the reaction cytidine(32) in tRNA + S-sulfanyl-L-cysteinyl-[cysteine desulfurase] + AH2 + ATP = 2-thiocytidine(32) in tRNA + L-cysteinyl-[cysteine desulfurase] + A + AMP + diphosphate + H(+). It functions in the pathway tRNA modification. Functionally, catalyzes the ATP-dependent 2-thiolation of cytidine in position 32 of tRNA, to form 2-thiocytidine (s(2)C32). The sulfur atoms are provided by the cysteine/cysteine desulfurase (IscS) system. The sequence is that of tRNA-cytidine(32) 2-sulfurtransferase from Bordetella avium (strain 197N).